A 502-amino-acid polypeptide reads, in one-letter code: 4,4'-diapophytoene desaturase (4,4'-diaponeurosporene-forming) (502 aa).

5 to 17 (VIGAGVTGLAAAA) is a binding site for FAD.

It belongs to the carotenoid/retinoid oxidoreductase family. CrtN subfamily.

The enzyme catalyses 15-cis-4,4'-diapophytoene + 3 FAD + 3 H(+) = all-trans-4,4'-diaponeurosporene + 3 FADH2. Its pathway is carotenoid biosynthesis; staphyloxanthin biosynthesis; staphyloxanthin from farnesyl diphosphate: step 2/5. In terms of biological role, involved in the biosynthesis of the yellow-orange carotenoid staphyloxanthin, which plays a role in the virulence via its protective function against oxidative stress. Catalyzes three successive dehydrogenation reactions that lead to the introduction of three double bonds into 4,4'-diapophytoene (dehydrosqualene), with 4,4'-diapophytofluene and 4,4'-diapo-zeta-carotene as intermediates, and 4,4'-diaponeurosporene (the major deep-yellow pigment in staphylococci strains) as the end product. The polypeptide is 4,4'-diapophytoene desaturase (4,4'-diaponeurosporene-forming) (Staphylococcus aureus (strain bovine RF122 / ET3-1)).